The chain runs to 436 residues: MEKIIVRGGRKLNGTVKVEGAKNAVLPVIAASLLASEEKSVICDVPTLSDVYTINEVLRHLGASVHFENNTVTVDASRTLSTEAPFEYVRKMRASVLVMGPLLARTGHSRVALPGGCAIGSRPIDQHLKGFEAMGAKIKVGNGFIEATVEGRLQGAKIYLDFPSVGATENLIMAAALAEGTTTLENAAKEPEIVDLANYINAMGGKIRGAGTGTIKIEGVKALHGAKHTIIPDRIEAGTFMVAAAITEGNVLVKGAVPEHLTSLIAKMEEMGVQILEEGDGLRIIGPSELKPIDLKTMPHPGFPTDMQSQMMALLMRANGTSMITETVFENRFMHAEEFRRMNGDIKIEGRSVIINGPVQLQGAEVAATDLRAGAALILAGLVADGHTRVTELKHLDRGYVNFHQKLAGLGADIERVNDEEAVHIENKEVVSDLNA.

22–23 lines the phosphoenolpyruvate pocket; that stretch reads KN. Position 93 (Arg-93) interacts with UDP-N-acetyl-alpha-D-glucosamine. Cys-117 functions as the Proton donor in the catalytic mechanism. A 2-(S-cysteinyl)pyruvic acid O-phosphothioketal modification is found at Cys-117. UDP-N-acetyl-alpha-D-glucosamine is bound by residues 122 to 126, Asp-306, and Val-328; that span reads RPIDQ.

This sequence belongs to the EPSP synthase family. MurA subfamily.

Its subcellular location is the cytoplasm. It catalyses the reaction phosphoenolpyruvate + UDP-N-acetyl-alpha-D-glucosamine = UDP-N-acetyl-3-O-(1-carboxyvinyl)-alpha-D-glucosamine + phosphate. It participates in cell wall biogenesis; peptidoglycan biosynthesis. In terms of biological role, cell wall formation. Adds enolpyruvyl to UDP-N-acetylglucosamine. This is UDP-N-acetylglucosamine 1-carboxyvinyltransferase 1 from Bacillus licheniformis (strain ATCC 14580 / DSM 13 / JCM 2505 / CCUG 7422 / NBRC 12200 / NCIMB 9375 / NCTC 10341 / NRRL NRS-1264 / Gibson 46).